The primary structure comprises 762 residues: MFIFIFLSLWTLLVMGREEGGVGSEEGVGKQCHPSLPPRCPSRSPSDQPWTHPDQSQLFADLSREELTAVMSFLTQKLGPDLVDAAQARPSDNCIFSVELQLPPKAAALAHLDRRSPPPAREALAIVFFGGQPQPNVTELVVGPLPQPSYMRDVTVERHGGPLPYYRHTVLLREYLDIDQMIFNRELPQAAGVLHHCCSYKQGGGNLVTMTTAPPGLQSGDRATWFGLYYNISKAGYYLHPVGLELLVDHKALDPAQWTIQKVFFQGRYYESLVQLEEQFEAGRVNVVVIPNNGTGGSWSLKSQVPPGPTPPLQFHPQGTRFSVQGSRVTSSLWTFSFGLGAFSGPRIFDIRFQGERLAYEISLQEAVAIYGGNTPAAMLTRYMDACFGMGKFATPLTRGVDCPYLATYVDWHFLLESQAPKTLHDAFCVFEQNKGLPLRRHHSDFISQYFGGVVETVLVFRSVSTLLNYDYVWDMVFHPNGAIEVKFHVTGYISSAFFFGTAQKYGNQVRENTLGTVHTHSAHYKVDLDVGGLENWVWAEDMAFVPTTVPWSPEHQIQRLQVIRKQLETEEQAAFPLGGGSPRYLYLASKQSNKWGHPRGYRIQTVSFAGRPLPQNSSTERAISWGRYQLAVTQRKETEPSSSSVFNQNDPWTPTVDFADFINNETIAGKDLVAWVTAGFLHIPHAEDIPNTVTVGNGVGFFLRPYNFFDQEPSMDSADSIYFREGQDAGSCEINPLACLPQAATCAPDLPVFSHGGYPEY.

A signal peptide spans 1–16 (MFIFIFLSLWTLLVMG). Residues 23 to 54 (GSEEGVGKQCHPSLPPRCPSRSPSDQPWTHPD) are disordered. N-linked (GlcNAc...) asparagine glycosylation is present at asparagine 136. A disulfide bridge links cysteine 197 with cysteine 198. Threonine 211 carries an O-linked (GalNAc...) threonine glycan. N-linked (GlcNAc...) asparagine glycosylation is found at asparagine 231 and asparagine 293. Residue 383–393 (YMDACFGMGKF) coordinates substrate. Residue aspartate 385 is the Proton acceptor of the active site. A disulfide bond links cysteine 403 and cysteine 429. A substrate-binding site is contributed by 467-472 (LLNYDY). The Schiff-base intermediate with substrate; via topaquinone role is filled by tyrosine 470. Position 470 is a 2',4',5'-topaquinone (tyrosine 470). Residues histidine 519 and histidine 521 each coordinate Cu cation. Residues aspartate 528, leucine 529, aspartate 530, and glutamate 571 each coordinate Ca(2+). 577–584 (PLGGGSPR) serves as a coordination point for heparin. N-linked (GlcNAc...) asparagine glycosylation is present at asparagine 617. 2 residues coordinate Ca(2+): phenylalanine 662 and asparagine 664. A glycan (N-linked (GlcNAc...) asparagine) is linked at asparagine 665. Ca(2+) is bound by residues glutamate 666, aspartate 672, and leucine 673. Histidine 683 is a Cu cation binding site. The cysteines at positions 733 and 740 are disulfide-linked.

The protein belongs to the copper/topaquinone oxidase family. In terms of assembly, homodimer; disulfide-linked. The cofactor is Cu cation. Ca(2+) is required as a cofactor. L-topaquinone serves as cofactor. Topaquinone (TPQ) is generated by copper-dependent autoxidation of a specific tyrosyl residue. In terms of tissue distribution, expressed in lung, spleen, heart and kidney.

The protein localises to the secreted. Its subcellular location is the extracellular space. It catalyses the reaction a primary methyl amine + O2 + H2O = an aldehyde + H2O2 + NH4(+). In Bos taurus (Bovine), this protein is Primary amine oxidase, lung isozyme.